A 447-amino-acid chain; its full sequence is Coagulation factor VII (447 aa).

The signal sequence occupies residues 1–23 (MLSQAWALALLCFLLSLWGSLPA). Residues 24-40 (VFLPQEQALSILHRPRR) constitute a propeptide that is removed on maturation. Residues 41–85 (ANGFLEELLPGSLERECREELCSFEEAHEIFRNEERTRQFWVSYN) enclose the Gla domain. Residues Glu-46, Glu-47, Glu-54, Glu-56, Glu-59, Glu-60, Glu-65, Glu-66, Glu-69, Glu-74, and Glu-75 each carry the 4-carboxyglutamate modification. Cys-57 and Cys-62 are disulfide-bonded. The EGF-like 1; calcium-binding domain maps to 86-122 (DGDQCASSPCQNGGSCEDQLRSYICFCPDGFEGRNCE). Intrachain disulfides connect Cys-90/Cys-101, Cys-95/Cys-110, Cys-112/Cys-121, Cys-131/Cys-142, Cys-138/Cys-152, Cys-154/Cys-167, Cys-175/Cys-302, Cys-199/Cys-204, Cys-218/Cys-234, and Cys-350/Cys-369. Residue Ser-92 is glycosylated (O-linked (Glc...) serine). Ser-92 carries O-linked (Glc...) serine; alternate glycosylation. A glycan (O-linked (Xyl...) serine; alternate) is linked at Ser-92. O-linked (Fuc) serine glycosylation is present at Ser-100. The EGF-like 2 domain occupies 127 to 168 (SQLICANDNGGCEQYCGADPGAGRFCWCHEGYALQADGVSCA). N-linked (GlcNAc...) asparagine glycosylation occurs at Asn-185. Residues 193-432 (IVGGHVCPKG…YTAWLRQLMG (240 aa)) form the Peptidase S1 domain. His-233 (charge relay system) is an active-site residue. The N-linked (GlcNAc...) asparagine glycan is linked to Asn-243. The active-site Charge relay system is Asp-282. Asp-378 contributes to the substrate binding site. Residues Cys-380 and Cys-408 are joined by a disulfide bond. The active-site Charge relay system is Ser-384.

The protein belongs to the peptidase S1 family. As to quaternary structure, heterodimer of a light chain and a heavy chain linked by a disulfide bond. The vitamin K-dependent, enzymatic carboxylation of some glutamate residues allows the modified protein to bind calcium. Post-translationally, O-glycosylated. O-fucosylated by POFUT1 on a conserved serine or threonine residue found in the consensus sequence C2-X(4,5)-[S/T]-C3 of EGF domains, where C2 and C3 are the second and third conserved cysteines. In terms of processing, can be either O-glucosylated or O-xylosylated at Ser-92 by POGLUT1. As to expression, plasma.

The protein localises to the secreted. It carries out the reaction Selective cleavage of Arg-|-Ile bond in factor X to form factor Xa.. Functionally, initiates the extrinsic pathway of blood coagulation. Serine protease that circulates in the blood in a zymogen form. Factor VII is converted to factor VIIa by factor Xa, factor XIIa, factor IXa, or thrombin by minor proteolysis. In the presence of tissue factor and calcium ions, factor VIIa then converts factor X to factor Xa by limited proteolysis. Factor VIIa also converts factor IX to factor IXa in the presence of tissue factor and calcium. The sequence is that of Coagulation factor VII (F7) from Bos taurus (Bovine).